Reading from the N-terminus, the 130-residue chain is Fluoride-specific ion channel FluC (130 aa).

4 consecutive transmembrane segments (helical) span residues 1 to 21 (MGEILLLAAGGALGAVSRYGL), 36 to 56 (GTLIVNCLGCFVLGFLMQWGF), 65 to 85 (LKLMLTAGFLGAFTTFSTFSY), and 103 to 123 (ILANVLLGLLMVFIGAYLGSL). The Na(+) site is built by Gly-75 and Thr-78.

This sequence belongs to the fluoride channel Fluc/FEX (TC 1.A.43) family.

It is found in the cell membrane. The enzyme catalyses fluoride(in) = fluoride(out). Na(+) is not transported, but it plays an essential structural role and its presence is essential for fluoride channel function. Fluoride-specific ion channel. Important for reducing fluoride concentration in the cell, thus reducing its toxicity. The sequence is that of Fluoride-specific ion channel FluC from Dehalococcoides mccartyi (strain ATCC BAA-2266 / KCTC 15142 / 195) (Dehalococcoides ethenogenes (strain 195)).